The primary structure comprises 106 residues: uORF protein (106 aa).

The segment covering 1–19 has biased composition (basic and acidic residues); that stretch reads MDLETRVSGHEKPQRRNPE. The tract at residues 1 to 31 is disordered; that stretch reads MDLETRVSGHEKPQRRNPEDPDCQYAKTRSS.

The protein resides in the host cytoplasm. It localises to the host cytoskeleton. In terms of biological role, plays a role in viral replication. This Zika virus (ZIKV) protein is uORF protein.